We begin with the raw amino-acid sequence, 626 residues long: Fructose-1,6-bisphosphatase class 3 (626 aa).

It belongs to the FBPase class 3 family. The cofactor is Mn(2+).

The catalysed reaction is beta-D-fructose 1,6-bisphosphate + H2O = beta-D-fructose 6-phosphate + phosphate. It participates in carbohydrate biosynthesis; gluconeogenesis. The chain is Fructose-1,6-bisphosphatase class 3 from Enterococcus faecalis (strain ATCC 700802 / V583).